A 454-amino-acid chain; its full sequence is Kynurenine 3-monooxygenase (454 aa).

Belongs to the aromatic-ring hydroxylase family. KMO subfamily. Requires FAD as cofactor.

The catalysed reaction is L-kynurenine + NADPH + O2 + H(+) = 3-hydroxy-L-kynurenine + NADP(+) + H2O. The protein operates within cofactor biosynthesis; NAD(+) biosynthesis; quinolinate from L-kynurenine: step 1/3. Catalyzes the hydroxylation of L-kynurenine (L-Kyn) to form 3-hydroxy-L-kynurenine (L-3OHKyn). Required for synthesis of quinolinic acid. This Salinispora arenicola (strain CNS-205) protein is Kynurenine 3-monooxygenase.